Reading from the N-terminus, the 200-residue chain is Phospholipase A2 inhibitor NAI (200 aa).

The signal sequence occupies residues 1-19; sequence MKSLLFCCLFGTFLATGMC. 8 disulfide bridges follow: cysteine 22–cysteine 46, cysteine 25–cysteine 32, cysteine 39–cysteine 67, cysteine 73–cysteine 94, cysteine 95–cysteine 100, cysteine 120–cysteine 145, cysteine 138–cysteine 165, and cysteine 171–cysteine 191.

This sequence belongs to the CNF-like-inhibitor family. Heterotrimer of 2 subunits A and 1 subunit B; non-covalently linked. Expressed by the liver.

The protein resides in the secreted. In terms of biological role, inhibits the enzymatic activity of all phospholipase A2 tested, binding with micromole to nanomole affinity. This Notechis ater (Black tiger snake) protein is Phospholipase A2 inhibitor NAI.